Consider the following 213-residue polypeptide: dITP/XTP pyrophosphatase (213 aa).

17–22 serves as a coordination point for substrate; the sequence is SNNAGK. Residue aspartate 78 is the Proton acceptor of the active site. A Mg(2+)-binding site is contributed by aspartate 78. Residues serine 79, 164 to 167, lysine 187, and 192 to 193 each bind substrate; these read FGYD and HR.

This sequence belongs to the HAM1 NTPase family. In terms of assembly, homodimer. Mg(2+) serves as cofactor.

The enzyme catalyses XTP + H2O = XMP + diphosphate + H(+). The catalysed reaction is dITP + H2O = dIMP + diphosphate + H(+). It carries out the reaction ITP + H2O = IMP + diphosphate + H(+). Pyrophosphatase that catalyzes the hydrolysis of nucleoside triphosphates to their monophosphate derivatives, with a high preference for the non-canonical purine nucleotides XTP (xanthosine triphosphate), dITP (deoxyinosine triphosphate) and ITP. Seems to function as a house-cleaning enzyme that removes non-canonical purine nucleotides from the nucleotide pool, thus preventing their incorporation into DNA/RNA and avoiding chromosomal lesions. This is dITP/XTP pyrophosphatase from Bordetella parapertussis (strain 12822 / ATCC BAA-587 / NCTC 13253).